A 147-amino-acid chain; its full sequence is Nucleoside diphosphate kinase (147 aa).

The ATP site is built by Lys-9, Phe-57, Arg-85, Thr-91, Arg-102, and Asn-112. His-115 acts as the Pros-phosphohistidine intermediate in catalysis.

Belongs to the NDK family. Mg(2+) serves as cofactor.

Its subcellular location is the cytoplasm. The enzyme catalyses a 2'-deoxyribonucleoside 5'-diphosphate + ATP = a 2'-deoxyribonucleoside 5'-triphosphate + ADP. It catalyses the reaction a ribonucleoside 5'-diphosphate + ATP = a ribonucleoside 5'-triphosphate + ADP. Its function is as follows. Major role in the synthesis of nucleoside triphosphates other than ATP. The ATP gamma phosphate is transferred to the NDP beta phosphate via a ping-pong mechanism, using a phosphorylated active-site intermediate. The chain is Nucleoside diphosphate kinase from Thermoplasma volcanium (strain ATCC 51530 / DSM 4299 / JCM 9571 / NBRC 15438 / GSS1).